The primary structure comprises 461 residues: Dihydrofolate reductase (461 aa).

Residues 233–447 (DLTMIVAVSS…VEIEFELYGK (215 aa)) form the DHFR domain. Residues Ala-239 and 246–252 (GIGKKNS) each bind NADP(+). 260-265 (EMAYFA) lines the substrate pocket. NADP(+) is bound at residue 292-294 (RSC). Arg-308 contacts substrate. NADP(+) is bound by residues 314-316 (TRN) and 365-372 (GGSFLYGS).

The protein belongs to the dihydrofolate reductase family.

The catalysed reaction is (6S)-5,6,7,8-tetrahydrofolate + NADP(+) = 7,8-dihydrofolate + NADPH + H(+). Its pathway is cofactor biosynthesis; tetrahydrofolate biosynthesis; 5,6,7,8-tetrahydrofolate from 7,8-dihydrofolate: step 1/1. Key enzyme in folate metabolism. Catalyzes an essential reaction for de novo glycine and purine synthesis, and for DNA precursor synthesis. This Schizosaccharomyces pombe (strain 972 / ATCC 24843) (Fission yeast) protein is Dihydrofolate reductase (dfr1).